Consider the following 216-residue polypeptide: Probable GTP-binding protein EngB (216 aa).

Positions 21 to 192 (DAPQIALAGR…WRELRALAAG (172 aa)) constitute an EngB-type G domain. GTP is bound by residues 29–36 (GRSNVGKS), 56–60 (GKTRS), 75–78 (DLPG), 142–145 (TKGD), and 170–173 (VTAS). Mg(2+) contacts are provided by serine 36 and threonine 58. Residues 195 to 216 (SADDEAEDAPSDTIDAIDDVTA) form a disordered region. Over residues 196–216 (ADDEAEDAPSDTIDAIDDVTA) the composition is skewed to acidic residues.

Belongs to the TRAFAC class TrmE-Era-EngA-EngB-Septin-like GTPase superfamily. EngB GTPase family. It depends on Mg(2+) as a cofactor.

In terms of biological role, necessary for normal cell division and for the maintenance of normal septation. The sequence is that of Probable GTP-binding protein EngB from Nitratidesulfovibrio vulgaris (strain DP4) (Desulfovibrio vulgaris).